The following is a 550-amino-acid chain: Arginine--tRNA ligase (550 aa).

Residues 130 to 140 carry the 'HIGH' region motif; the sequence is ANPTGPIHIGG.

It belongs to the class-I aminoacyl-tRNA synthetase family. Monomer.

Its subcellular location is the cytoplasm. The catalysed reaction is tRNA(Arg) + L-arginine + ATP = L-arginyl-tRNA(Arg) + AMP + diphosphate. This is Arginine--tRNA ligase (argS) from Mycobacterium leprae (strain TN).